The sequence spans 84 residues: Large ribosomal subunit protein bL28 (84 aa).

This sequence belongs to the bacterial ribosomal protein bL28 family.

The sequence is that of Large ribosomal subunit protein bL28 from Deinococcus geothermalis (strain DSM 11300 / CIP 105573 / AG-3a).